Reading from the N-terminus, the 349-residue chain is MENIETILRLAEDKILLVQNLKALQEYKVEFLGKNGIVTGELKKLGSLNEQERKEFGLKINKLKDKIQNIIKAKAEILEEQELNFKLAADKIDLTIPARRYKQGSIHPITQCSEELIQVFSQFGFTIENGPNIENDFHNFTALNFEDDHPARQMHDTFYLKSQENNKPLLLRTHTSTVQIRAMKNGKPPFRFIAPGRTYRSDSDMTHTPMFHQIEGLVMDKNINMGHLKYVITTFIKSFFENSNIELRFRPSFFPFTEPSAEVDIRMNKNDKWLEVLGCGMVHPNVLKNVGIDSSEYQGFAFGLGVERFAMLKYNIKDLRQFFEGDMRWLKHYNFGSFDIPNLAGGLTK.

Glu258 provides a ligand contact to Mg(2+).

Belongs to the class-II aminoacyl-tRNA synthetase family. Phe-tRNA synthetase alpha subunit type 1 subfamily. In terms of assembly, tetramer of two alpha and two beta subunits. Mg(2+) is required as a cofactor.

The protein localises to the cytoplasm. It catalyses the reaction tRNA(Phe) + L-phenylalanine + ATP = L-phenylalanyl-tRNA(Phe) + AMP + diphosphate + H(+). The chain is Phenylalanine--tRNA ligase alpha subunit from Rickettsia conorii (strain ATCC VR-613 / Malish 7).